A 411-amino-acid chain; its full sequence is Tyrosine--tRNA ligase (411 aa).

Position 34 (tyrosine 34) interacts with L-tyrosine. Positions 39 to 48 (CTATSLHIGS) match the 'HIGH' region motif. Positions 171 and 175 each coordinate L-tyrosine. The 'KMSKS' region motif lies at 231–235 (KMGKT). Lysine 234 is a binding site for ATP. The region spanning 345-411 (ISAYELFHEA…GKKRHILVRV (67 aa)) is the S4 RNA-binding domain.

Belongs to the class-I aminoacyl-tRNA synthetase family. TyrS type 1 subfamily. In terms of assembly, homodimer.

The protein resides in the cytoplasm. It carries out the reaction tRNA(Tyr) + L-tyrosine + ATP = L-tyrosyl-tRNA(Tyr) + AMP + diphosphate + H(+). Functionally, catalyzes the attachment of tyrosine to tRNA(Tyr) in a two-step reaction: tyrosine is first activated by ATP to form Tyr-AMP and then transferred to the acceptor end of tRNA(Tyr). The chain is Tyrosine--tRNA ligase from Rickettsia africae (strain ESF-5).